We begin with the raw amino-acid sequence, 556 residues long: Peptidylarginine deiminase (556 aa).

The N-terminal stretch at 1 to 23 is a signal peptide; that stretch reads MKKLLQAKALILALGLFQLPAIA. Residues 24–43 constitute a propeptide that is removed on maturation; that stretch reads QTQMQADRTNGQFATEEMQR. Catalysis depends on Cys351, which acts as the Amidino-cysteine intermediate.

This sequence belongs to the agmatine deiminase family. FAD serves as cofactor. FMN is required as a cofactor.

It is found in the secreted. With respect to regulation, inhibited by cysteine and TLCK. Inhibited by high concentration of thiourea and thio-L-citrulline. In terms of biological role, deiminates the guanidino group of C-terminal arginine residues on a variety of peptides, including the vasoregulatory peptide-hormone bradykinin, to yield ammonia and a citrulline residue. May promote the growth of the pathogen in the periodontal pocket by producing ammonia, ammonia having a protective effect during acidic cleaning cycles in the mouth. The sequence is that of Peptidylarginine deiminase from Porphyromonas gingivalis (strain ATCC BAA-308 / W83).